Reading from the N-terminus, the 1682-residue chain is Cilia- and flagella-associated protein 43 (1682 aa).

6 WD repeats span residues asparagine 168–histidine 207, proline 262–leucine 305, aspartate 315–lysine 354, glutamate 358–lysine 397, leucine 488–isoleucine 527, and serine 697–alanine 738. Residues arginine 767–glutamate 790 form a disordered region. 2 coiled-coil regions span residues lysine 926–glutamine 960 and serine 1171–arginine 1223.

Belongs to the CFAP43 family. In terms of tissue distribution, expressed in testis. Expressed in the lung, brain, oviduct and nasal cavity.

The protein resides in the cell projection. The protein localises to the cilium. It is found in the flagellum. It localises to the cytoplasm. Its subcellular location is the cytoskeleton. The protein resides in the flagellum axoneme. The protein localises to the cilium axoneme. Functionally, flagellar protein involved in sperm flagellum axoneme organization and function. Involved in the regulation of the beating frequency of motile cilia on the epithelial cells of the respiratory tract. This Mus musculus (Mouse) protein is Cilia- and flagella-associated protein 43.